A 310-amino-acid chain; its full sequence is MEAENHTTVAELIILGLTEDPKLCIVFFVIFLGVYIITLVGNISIITLIRISSQLHTPMYLFLSHLAFVDIVFSTSVSVIMLMELLGHGLVLSVATCAAQLCMTVSFGSAECFLLAAMAYDRYVAICSPLLYSTLMSSRVCFLLLGISYVGGFVNGWTFTGCVLSLSFCGPTQINHFFCDFSPLLKVSCSDVSIIGIIPSISSGSIIVVTVFVIAVSYIYILITILKMRSTEGRHKAFSTCTSHLTAVTLFYGTITVIYVMPKSSYSTEQNKVISLFYTVVIPMLNPLIYSLRNRDVKDALRKAIVRVYS.

Topologically, residues Met-1–Ile-25 are extracellular. Residue Asn-5 is glycosylated (N-linked (GlcNAc...) asparagine). The helical transmembrane segment at Val-26–Ile-46 threads the bilayer. Over Thr-47–Gln-54 the chain is Cytoplasmic. A helical transmembrane segment spans residues Leu-55–Thr-75. The Extracellular portion of the chain corresponds to Ser-76–Ala-99. Cys-97 and Cys-189 are oxidised to a cystine. A helical membrane pass occupies residues Gln-100–Tyr-120. Residues Asp-121–Ser-133 lie on the Cytoplasmic side of the membrane. The helical transmembrane segment at Thr-134–Val-154 threads the bilayer. At Asn-155–Gly-196 the chain is on the extracellular side. The helical transmembrane segment at Ile-197 to Ser-217 threads the bilayer. Over Tyr-218–Ala-237 the chain is Cytoplasmic. The helical transmembrane segment at Phe-238–Ile-258 threads the bilayer. Residues Tyr-259–Asn-271 lie on the Extracellular side of the membrane. The helical transmembrane segment at Lys-272 to Leu-292 threads the bilayer. The Cytoplasmic segment spans residues Arg-293–Ser-310.

The protein belongs to the G-protein coupled receptor 1 family.

It is found in the cell membrane. Functionally, potential odorant receptor. The polypeptide is Olfactory receptor 5P52 (Mus musculus (Mouse)).